The primary structure comprises 896 residues: Protein bride of sevenless (896 aa).

The N-terminal stretch at 1 to 31 is a signal peptide; the sequence is MKVMDALQSGRRKPLPVALLCILVTVFCVLE. Over 32 to 530 the chain is Extracellular; it reads CHGADLTSPT…MFWRIKMDTW (499 aa). A disordered region spans residues 38 to 84; it reads TSPTKKSAPLRITKPQPTSQQAKPISITTRAPTTVASTTDDEVSSSV. Positions 52–64 are enriched in polar residues; sequence PQPTSQQAKPISI. The span at 65-84 shows a compositional bias: low complexity; it reads TTRAPTTVASTTDDEVSSSV. Residues Asn183, Asn307, Asn474, and Asn485 are each glycosylated (N-linked (GlcNAc...) asparagine). A run of 7 helical transmembrane segments spans residues 531–554, 570–588, 615–637, 655–676, 693–712, 728–748, and 759–781; these read VATG…FIVV, ILLL…PYSI, VFIM…VMLA, AVIC…LVVM, WLWG…GALI, IVIG…LSLF, and LGLQ…FLIV. The Cytoplasmic portion of the chain corresponds to 782–896; that stretch reads RGIERSDIAQ…SPDHNKITRF (115 aa). Disordered stretches follow at residues 825–844 and 861–896; these read SQDE…PLRG and ANIN…ITRF. Positions 874–884 are enriched in low complexity; that stretch reads QSPSRSSVSSL.

The protein belongs to the G-protein coupled receptor 3 family. In terms of tissue distribution, expressed exclusively by R8 photoreceptor cells and is internalized in a sev-dependent manner by R7 cells.

It is found in the cell membrane. Acts as a ligand for sevenless tyrosine-kinase receptor during eye development. This is Protein bride of sevenless (boss) from Drosophila melanogaster (Fruit fly).